We begin with the raw amino-acid sequence, 795 residues long: Phenylalanine--tRNA ligase beta subunit (795 aa).

The 110-residue stretch at 39 to 148 folds into the tRNA-binding domain; sequence AGTFNGVKVG…IDAPIGMDFR (110 aa). Positions 401 to 476 constitute a B5 domain; the sequence is PKPNKVALRR…RIYGYDNIPN (76 aa). 4 residues coordinate Mg(2+): Asp454, Asp460, Glu463, and Glu464. Positions 701–794 constitute an FDX-ACB domain; it reads SKFPANRRDI…VSEKFGASLR (94 aa).

Belongs to the phenylalanyl-tRNA synthetase beta subunit family. Type 1 subfamily. As to quaternary structure, tetramer of two alpha and two beta subunits. Requires Mg(2+) as cofactor.

The protein resides in the cytoplasm. The enzyme catalyses tRNA(Phe) + L-phenylalanine + ATP = L-phenylalanyl-tRNA(Phe) + AMP + diphosphate + H(+). The sequence is that of Phenylalanine--tRNA ligase beta subunit from Vibrio vulnificus (strain YJ016).